Consider the following 379-residue polypeptide: Junctional adhesion molecule-like (379 aa).

The signal sequence occupies residues 1 to 20 (MLCLLKLIVIPVILAPVGYP). At 21–281 (QGLPGLTVSS…QQGILNGNQL (261 aa)) the chain is on the extracellular side. Ig-like V-type domains follow at residues 24-135 (PGLT…KPVE) and 140-250 (PEEP…KTIV). The cysteines at positions 45 and 119 are disulfide-linked. N-linked (GlcNAc...) asparagine glycosylation is found at Asn-79, Asn-89, and Asn-125. An intrachain disulfide couples Cys-158 to Cys-236. The chain crosses the membrane as a helical span at residues 282 to 302 (VIIVGIVCATFLLLPVLILIV). Over 303 to 379 (KKAKWNKSSV…SLVRSSVRSK (77 aa)) the chain is Cytoplasmic. Tyr-355 carries the post-translational modification Phosphotyrosine.

This sequence belongs to the immunoglobulin superfamily. Homodimer; active form in leukocyte-endothelial cell adhesion. Interacts (homodimeric form) with CXADR. Interacts (via cytoplasmic domain) with the PI3 kinase; upon CXADR-binding. Interacts with ITGA4 and ITGB1; integrin alpha-4/beta-1 may regulate leukocyte to endothelial cells adhesion by controlling JAML homodimerization. Expressed by gamma-delta intraepithelial T cells (at protein level).

Its subcellular location is the cell membrane. It is found in the cell junction. Transmembrane protein of the plasma membrane of leukocytes that control their migration and activation through interaction with CXADR, a plasma membrane receptor found on adjacent epithelial and endothelial cells. The interaction between both receptors mediates the activation of gamma-delta T-cells, a subpopulation of T-cells residing in epithelia and involved in tissue homeostasis and repair. Upon epithelial CXADR-binding, JAML induces downstream cell signaling events in gamma-delta T-cells through PI3-kinase and MAP kinases. It results in proliferation and production of cytokines and growth factors by T-cells that in turn stimulate epithelial tissues repair. It also controls the transmigration of leukocytes within epithelial and endothelial tissues through adhesive interactions with epithelial and endothelial CXADR. This is Junctional adhesion molecule-like from Mus musculus (Mouse).